Here is a 387-residue protein sequence, read N- to C-terminus: Patatin group A-2 (387 aa).

The N-terminal stretch at 1-23 (MATTKSFLILIVMILATTSSTFA) is a signal peptide. The PNPLA domain occupies 32–230 (LSIDGGGIKG…TVADPALLSV (199 aa)). Positions 36-41 (GGGIKG) match the GXGXXG motif. The GXSXG signature appears at 75–79 (GTSTG). Serine 77 acts as the Nucleophile in catalysis. Asparagine 115 carries an N-linked (GlcNAc...) asparagine glycan. The active-site Proton acceptor is aspartate 216. The DGA/G signature appears at 216 to 218 (DGA). A coiled-coil region spans residues 361–385 (ETYEEALKRFAKLLSDRKKLRANKA).

Belongs to the patatin family. Tuber and stolon.

Its subcellular location is the vacuole. In terms of biological role, probable lipolytic acyl hydrolase (LAH), an activity which is thought to be involved in the response of tubers to pathogens. This chain is Patatin group A-2, found in Solanum tuberosum (Potato).